We begin with the raw amino-acid sequence, 1284 residues long: DNA topoisomerase 2, mitochondrial (1284 aa).

Residues 1–35 constitute a mitochondrion transit peptide; sequence MSKLLNNNNHKNLTNYLKFGKGIINNLNNKSKQVG. ATP is bound by residues Asn-183, Asn-212, 240–242, and 253–260; these read GSN and GRNGFGAK. The interaction with DNA stretch occupies residues 445–447; it reads KKK. 478–480 is an ATP binding site; that stretch reads QSK. The Toprim domain maps to 560–677; that stretch reads CTLIITEGDS…NLLKRGFLVE (118 aa). Residues Glu-566, Asp-646, and Asp-648 each contribute to the Mg(2+) site. Residues 810–1232 enclose the Topo IIA-type catalytic domain; that stretch reads IPSLIDGLKP…DPKSLWTADL (423 aa). Residue Tyr-900 is the O-(5'-phospho-DNA)-tyrosine intermediate of the active site. A disordered region spans residues 1245–1284; sequence EFQKKPLKTSSSSSFDVSSSSESAKLSSTRKSKTDKIKSK. Positions 1254 to 1271 are enriched in low complexity; that stretch reads SSSSSFDVSSSSESAKLS.

It belongs to the type II topoisomerase family. Homodimer. It depends on Mg(2+) as a cofactor. Mn(2+) is required as a cofactor. Ca(2+) serves as cofactor.

The protein localises to the mitochondrion. It carries out the reaction ATP-dependent breakage, passage and rejoining of double-stranded DNA.. In terms of biological role, control of topological states of DNA by transient breakage and subsequent rejoining of DNA strands. Topoisomerase II makes double-strand breaks. The chain is DNA topoisomerase 2, mitochondrial (top2mt) from Dictyostelium discoideum (Social amoeba).